The sequence spans 213 residues: Translation initiation factor IF-3 (213 aa).

The segment at 193–213 (EKIASLPPLPPDNSGEPEDDE) is disordered.

It belongs to the IF-3 family. In terms of assembly, monomer.

The protein localises to the cytoplasm. Functionally, IF-3 binds to the 30S ribosomal subunit and shifts the equilibrium between 70S ribosomes and their 50S and 30S subunits in favor of the free subunits, thus enhancing the availability of 30S subunits on which protein synthesis initiation begins. The protein is Translation initiation factor IF-3 of Chlorobaculum tepidum (strain ATCC 49652 / DSM 12025 / NBRC 103806 / TLS) (Chlorobium tepidum).